The chain runs to 331 residues: Peroxidase 60 (331 aa).

Positions 1–26 (MAVKISTIEVLILSLALLSFGHGCYG) are cleaved as a signal peptide. 4 disulfides stabilise this stretch: Cys-37-Cys-113, Cys-70-Cys-75, Cys-119-Cys-321, and Cys-198-Cys-230. The Proton acceptor role is filled by His-68. Ca(2+) contacts are provided by Asp-69, Gly-74, Asp-76, and Ser-78. A substrate-binding site is contributed by Pro-161. His-191 contributes to the heme b binding site. Residue Thr-192 coordinates Ca(2+). N-linked (GlcNAc...) asparagine glycosylation occurs at Asn-245. 2 residues coordinate Ca(2+): Ser-248 and Asp-253.

The protein belongs to the peroxidase family. Classical plant (class III) peroxidase subfamily. Heme b serves as cofactor. Requires Ca(2+) as cofactor. Expressed in roots, slightly in leaves.

It localises to the secreted. It catalyses the reaction 2 a phenolic donor + H2O2 = 2 a phenolic radical donor + 2 H2O. Removal of H(2)O(2), oxidation of toxic reductants, biosynthesis and degradation of lignin, suberization, auxin catabolism, response to environmental stresses such as wounding, pathogen attack and oxidative stress. These functions might be dependent on each isozyme/isoform in each plant tissue. The polypeptide is Peroxidase 60 (PER60) (Arabidopsis thaliana (Mouse-ear cress)).